The primary structure comprises 304 residues: Putative S-adenosyl-L-methionine-dependent methyltransferase Mjls_1071 (304 aa).

S-adenosyl-L-methionine contacts are provided by residues Asp-130 and 159 to 160 (DL).

This sequence belongs to the UPF0677 family.

Functionally, exhibits S-adenosyl-L-methionine-dependent methyltransferase activity. The sequence is that of Putative S-adenosyl-L-methionine-dependent methyltransferase Mjls_1071 from Mycobacterium sp. (strain JLS).